Consider the following 376-residue polypeptide: MADQLTPHLEIPTAIKPRDGRFGSGPSKVRLEQLQTLTTTAAALFGTSHRQAPVKNLVGRVRSGLAELFSLPDGYEVILGNGGATAFWDAAAFGLIDKRSLHLTYGEFSAKFASAVSKNPFVGEPIIITSDPGSAPEPQTDPSVDVIAWAHNETSTGVAVAVRRPEGSDDALVVIDATSGAGGLPVDIAETDAYYFAPQKNFASDGGLWLAIMSPAALSRIEAIAATGRWVPDFLSLPIAVENSLKNQTYNTPAIATLALLAEQIDWLVGNGGLDWAVKRTADSSQRLYSWAQERPYTTPFVTDPGLRSQVVGTIDFVDDVDAGTVAKILRANGIVDTEPYRKLGRNQLRVAMFPAVEPDDVSALTECVDWVVERL.

L-glutamate is bound at residue Arg50. Residues 84–85 (AT), Phe108, Thr154, Asp176, and Gln199 contribute to the pyridoxal 5'-phosphate site. Lys200 is modified (N6-(pyridoxal phosphate)lysine). Position 251-252 (251-252 (NT)) interacts with pyridoxal 5'-phosphate.

It belongs to the class-V pyridoxal-phosphate-dependent aminotransferase family. SerC subfamily. In terms of assembly, homodimer. The cofactor is pyridoxal 5'-phosphate.

The protein resides in the cytoplasm. The enzyme catalyses O-phospho-L-serine + 2-oxoglutarate = 3-phosphooxypyruvate + L-glutamate. It carries out the reaction 4-(phosphooxy)-L-threonine + 2-oxoglutarate = (R)-3-hydroxy-2-oxo-4-phosphooxybutanoate + L-glutamate. It functions in the pathway amino-acid biosynthesis; L-serine biosynthesis; L-serine from 3-phospho-D-glycerate: step 2/3. The protein operates within cofactor biosynthesis; pyridoxine 5'-phosphate biosynthesis; pyridoxine 5'-phosphate from D-erythrose 4-phosphate: step 3/5. Functionally, catalyzes the reversible conversion of 3-phosphohydroxypyruvate to phosphoserine and of 3-hydroxy-2-oxo-4-phosphonooxybutanoate to phosphohydroxythreonine. This Mycobacterium bovis (strain ATCC BAA-935 / AF2122/97) protein is Putative phosphoserine aminotransferase.